The primary structure comprises 127 residues: Modulator protein MzrA (127 aa).

Over 1 to 10 (MQIPRMSLRQ) the chain is Cytoplasmic. The chain crosses the membrane as a helical span at residues 11–31 (LAWSGAVLLLVGTLLLAWSAV). Residues 32 to 127 (RQQESTLAIR…RLRDNSHRFG (96 aa)) are Periplasmic-facing.

Belongs to the MzrA family. In terms of assembly, interacts with EnvZ.

It localises to the cell inner membrane. Functionally, modulates the activity of the EnvZ/OmpR two-component regulatory system, probably by directly modulating EnvZ enzymatic activity and increasing stability of phosphorylated OmpR. Links the two-component systems CpxA/CpxR and EnvZ/OmpR. This chain is Modulator protein MzrA, found in Escherichia coli (strain K12).